We begin with the raw amino-acid sequence, 356 residues long: MRGRVLSFTLFGESHGKGVGVVITGIPPGIKVSHEELVKELERRKGIPGLSTARSEPDNPIILSGIFRGYTTGTPIAVLFENKDVDSSYYEDIKDKPRPGHADYPARIKYFGYNDYRGGGHFSGRLTVGIVTAGYFAKKILEKYGIRIRAYIKRIGRVEAKQLTLEEILSSENPFCPDEEAFEKMVEEIELARREGDSVGGIVEVVAVNVPPGLGGPYEEDIEADLASAFFRIPAVKGVEFGLGFKVAEKRGSEVNDPYVIRDGKVVTKTNNHGGVLGGITTGMPIIARIAFKPTPSIYLPQRTVDLREMKEVEIKLRGRFDPSIVPRALPVVEGVMAFVLADHLLFRRVWELKSS.

NADP(+) is bound at residue Arg-44. FMN contacts are provided by residues 121 to 123, Gly-278, 293 to 297, and Arg-320; these read HFS and KPTPS.

The protein belongs to the chorismate synthase family. The cofactor is FMNH2.

It carries out the reaction 5-O-(1-carboxyvinyl)-3-phosphoshikimate = chorismate + phosphate. It functions in the pathway metabolic intermediate biosynthesis; chorismate biosynthesis; chorismate from D-erythrose 4-phosphate and phosphoenolpyruvate: step 7/7. Its function is as follows. Catalyzes the anti-1,4-elimination of the C-3 phosphate and the C-6 proR hydrogen from 5-enolpyruvylshikimate-3-phosphate (EPSP) to yield chorismate, which is the branch point compound that serves as the starting substrate for the three terminal pathways of aromatic amino acid biosynthesis. This reaction introduces a second double bond into the aromatic ring system. This Pyrococcus abyssi (strain GE5 / Orsay) protein is Chorismate synthase.